Reading from the N-terminus, the 314-residue chain is tRNA pseudouridine synthase B (314 aa).

His43 lines the substrate pocket. The active-site Nucleophile is Asp48. Tyr76, Tyr179, and Leu200 together coordinate substrate.

Belongs to the pseudouridine synthase TruB family. Type 1 subfamily.

The enzyme catalyses uridine(55) in tRNA = pseudouridine(55) in tRNA. Responsible for synthesis of pseudouridine from uracil-55 in the psi GC loop of transfer RNAs. The sequence is that of tRNA pseudouridine synthase B from Salmonella paratyphi B (strain ATCC BAA-1250 / SPB7).